We begin with the raw amino-acid sequence, 242 residues long: MIIEIITIFPLFFKSFCETSIIKRALEQKKVQIKLHDLRTYSKNKHNQVDDSVYGGGVGMLLSFPPFFDCLQKIKTPQSKVILLSPQGKIFNQIHATNFAQKETHLIILCGNYEGVDARILQYIDAEISIGDYVLTGGEIAATVLVDAITRLLPEVIKEQSFLEDSHQQGLLKHPQYTRPQSYLNHEVPAVLLSGNHAKIRCWRQKESLKATLQKRPDLLENKKLTLEQTKLLTEIKQELQK.

Residues glycine 111 and 130–135 (IGDYVL) each bind S-adenosyl-L-methionine.

This sequence belongs to the RNA methyltransferase TrmD family. In terms of assembly, homodimer.

The protein resides in the cytoplasm. The enzyme catalyses guanosine(37) in tRNA + S-adenosyl-L-methionine = N(1)-methylguanosine(37) in tRNA + S-adenosyl-L-homocysteine + H(+). Functionally, specifically methylates guanosine-37 in various tRNAs. The chain is tRNA (guanine-N(1)-)-methyltransferase from Onion yellows phytoplasma (strain OY-M).